Consider the following 959-residue polypeptide: Isoleucine--tRNA ligase (959 aa).

The 'HIGH' region signature appears at 60–70; sequence PYANGSLHMGH. Residue Glu-569 coordinates L-isoleucyl-5'-AMP. The short motif at 610-614 is the 'KMSKS' region element; that stretch reads KMSKS. Lys-613 is a binding site for ATP. Residues Cys-928, Cys-931, Cys-948, and Cys-951 each coordinate Zn(2+).

It belongs to the class-I aminoacyl-tRNA synthetase family. IleS type 1 subfamily. Monomer. Zn(2+) serves as cofactor.

The protein resides in the cytoplasm. It carries out the reaction tRNA(Ile) + L-isoleucine + ATP = L-isoleucyl-tRNA(Ile) + AMP + diphosphate. In terms of biological role, catalyzes the attachment of isoleucine to tRNA(Ile). As IleRS can inadvertently accommodate and process structurally similar amino acids such as valine, to avoid such errors it has two additional distinct tRNA(Ile)-dependent editing activities. One activity is designated as 'pretransfer' editing and involves the hydrolysis of activated Val-AMP. The other activity is designated 'posttransfer' editing and involves deacylation of mischarged Val-tRNA(Ile). This is Isoleucine--tRNA ligase from Crocosphaera subtropica (strain ATCC 51142 / BH68) (Cyanothece sp. (strain ATCC 51142)).